A 508-amino-acid chain; its full sequence is Phenylalanine--tRNA ligase alpha subunit (508 aa).

Position 2 is an N-acetylalanine (A2). T190 is modified (phosphothreonine). Phosphoserine is present on residues S193 and S301. Position 311 is an N6-acetyllysine (K311). L-phenylalanine is bound by residues T329, 372-374 (QIE), and Y412. E414 serves as a coordination point for Mg(2+). F438 contacts L-phenylalanine.

Belongs to the class-II aminoacyl-tRNA synthetase family. Phe-tRNA synthetase alpha subunit type 2 subfamily. Heterotetramer; dimer of two heterodimers formed by FARSA and FARSB.

The protein localises to the cytoplasm. The catalysed reaction is tRNA(Phe) + L-phenylalanine + ATP = L-phenylalanyl-tRNA(Phe) + AMP + diphosphate + H(+). The polypeptide is Phenylalanine--tRNA ligase alpha subunit (FARSA) (Homo sapiens (Human)).